The following is a 282-amino-acid chain: NADPH-dependent 7-cyano-7-deazaguanine reductase (282 aa).

Position 88–90 (88–90 (IES)) interacts with substrate. An NADPH-binding site is contributed by 90 to 91 (SK). The Thioimide intermediate role is filled by cysteine 190. The active-site Proton donor is aspartate 197. Residue 229-230 (HE) participates in substrate binding. 258–259 (RG) is an NADPH binding site.

This sequence belongs to the GTP cyclohydrolase I family. QueF type 2 subfamily. In terms of assembly, homodimer.

The protein resides in the cytoplasm. It carries out the reaction 7-aminomethyl-7-carbaguanine + 2 NADP(+) = 7-cyano-7-deazaguanine + 2 NADPH + 3 H(+). It functions in the pathway tRNA modification; tRNA-queuosine biosynthesis. Functionally, catalyzes the NADPH-dependent reduction of 7-cyano-7-deazaguanine (preQ0) to 7-aminomethyl-7-deazaguanine (preQ1). In Salmonella schwarzengrund (strain CVM19633), this protein is NADPH-dependent 7-cyano-7-deazaguanine reductase.